We begin with the raw amino-acid sequence, 250 residues long: 2,3-bisphosphoglycerate-dependent phosphoglycerate mutase (250 aa).

Substrate contacts are provided by residues 10–17 (RHGESQWN), 23–24 (TG), Arg62, 89–92 (ERHY), Lys100, 116–117 (RR), and 185–186 (GN). His11 acts as the Tele-phosphohistidine intermediate in catalysis. The Proton donor/acceptor role is filled by Glu89.

Belongs to the phosphoglycerate mutase family. BPG-dependent PGAM subfamily. Homodimer.

The catalysed reaction is (2R)-2-phosphoglycerate = (2R)-3-phosphoglycerate. Its pathway is carbohydrate degradation; glycolysis; pyruvate from D-glyceraldehyde 3-phosphate: step 3/5. Catalyzes the interconversion of 2-phosphoglycerate and 3-phosphoglycerate. The sequence is that of 2,3-bisphosphoglycerate-dependent phosphoglycerate mutase from Sodalis glossinidius (strain morsitans).